Here is a 1212-residue protein sequence, read N- to C-terminus: Metabotropic glutamate receptor 5 (1212 aa).

The first 20 residues, 1-20 (MVLLLILSVLLLKEDVRGSA), serve as a signal peptide directing secretion. At 22–580 (SSERRVVAHM…QYLRWGDPEP (559 aa)) the chain is on the extracellular side. A disulfide bridge connects residues C57 and C99. Position 64 (Y64) interacts with L-glutamate. N88 carries an N-linked (GlcNAc...) asparagine glycan. Residues S152 and 173–175 (SAT) contribute to the L-glutamate site. N-linked (GlcNAc...) asparagine glycosylation occurs at N210. Y223 lines the L-glutamate pocket. Disulfide bonds link C241/C530, C276/C278, C365/C381, C419/C426, C511/C531, C515/C534, C537/C549, and C552/C565. D305 is an L-glutamate binding site. Residues N378 and N382 are each glycosylated (N-linked (GlcNAc...) asparagine). K396 contributes to the L-glutamate binding site. N445 carries N-linked (GlcNAc...) asparagine glycosylation. Residues 581 to 603 (IAAVVFACLGLLATLFVTVVFII) traverse the membrane as a helical segment. Over 604–613 (YRDTPVVKSS) the chain is Cytoplasmic. The helical transmembrane segment at 614 to 636 (SRELCYIILAGICLGYLCTFCLI) threads the bilayer. Residues 637–644 (AKPKQIYC) lie on the Extracellular side of the membrane. Cysteines 644 and 733 form a disulfide. Residues 645 to 667 (YLQRIGIGLSPAMSYSALVTKTN) form a helical membrane-spanning segment. Residues 668–693 (RIARILAGSKKKICTKKPRFMSACAQ) are Cytoplasmic-facing. A helical transmembrane segment spans residues 694 to 714 (LVIAFILICIQLGIIVALFIM). At 715 to 737 (EPPDIMHDYPSIREVYLICNTTN) the chain is on the extracellular side. N-linked (GlcNAc...) asparagine glycosylation occurs at N734. A helical transmembrane segment spans residues 738-759 (LGVVTPLGYNGLLILSCTFYAF). Residues 760–772 (KTRNVPANFNEAK) lie on the Cytoplasmic side of the membrane. A helical membrane pass occupies residues 773–795 (YIAFTMYTTCIIWLAFVPIYFGS). Residues 796–798 (NYK) lie on the Extracellular side of the membrane. The helical transmembrane segment at 799-820 (IITMCFSVSLSATVALGCMFVP) threads the bilayer. At 821–1212 (KVYIILAKPE…RDYTQSSSSL (392 aa)) the chain is on the cytoplasmic side. The residue at position 861 (S861) is a Phosphoserine. Omega-N-methylarginine is present on residues R869 and R925. Disordered regions lie at residues 937–971 (INKK…GGSA), 1010–1056 (FPAP…SQGS), and 1132–1191 (GAQA…ALCI). The span at 961–971 (LGAGAGAGGSA) shows a compositional bias: gly residues. 2 positions are modified to phosphoserine: S1018 and S1020. Residues 1132–1153 (GAQAAGDAARESPAAGPEAAAA) are compositionally biased toward low complexity. Residues 1174 to 1185 (DSGSTTPNSPVS) show a composition bias toward polar residues.

Belongs to the G-protein coupled receptor 3 family. As to quaternary structure, the PPXXF motif binds HOMER1, HOMER2 and HOMER3. Interacts with SIAH1, RYR1, RYR2, ITPR1, SHANK1, SHANK3 and TAMALIN. Interacts with NCDN. Isoform 2 interacts with NECAB2. Interacts with CAMK2A.

The protein localises to the cell membrane. Its function is as follows. G-protein coupled receptor for glutamate. Ligand binding causes a conformation change that triggers signaling via guanine nucleotide-binding proteins (G proteins) and modulates the activity of down-stream effectors. Signaling activates a phosphatidylinositol-calcium second messenger system and generates a calcium-activated chloride current. Plays an important role in the regulation of synaptic plasticity and the modulation of the neural network activity. This is Metabotropic glutamate receptor 5 (GRM5) from Homo sapiens (Human).